A 380-amino-acid polypeptide reads, in one-letter code: Flap endonuclease 1 (380 aa).

The tract at residues 1-104 (MGIHGLTKLI…AELEKRGEKR (104 aa)) is N-domain. A Mg(2+)-binding site is contributed by Asp-34. DNA-binding residues include Arg-47 and Arg-70. Residues Asp-86, Glu-158, Glu-160, Asp-179, and Asp-181 each contribute to the Mg(2+) site. The tract at residues 122 to 253 (NIDKFSKRLV…KRAIDLIKQH (132 aa)) is I-domain. A DNA-binding site is contributed by Glu-158. The DNA site is built by Gly-231 and Asp-233. Asp-233 serves as a coordination point for Mg(2+). Residues 336 to 344 (TQGRLDSFF) are interaction with PCNA. The segment at 351–380 (SSKRKEPELKGSAKKKQKTGATPGKFKKGK) is disordered.

It belongs to the XPG/RAD2 endonuclease family. FEN1 subfamily. As to quaternary structure, interacts with PCNA. Three molecules of fen1 bind to one PCNA trimer with each molecule binding to one PCNA monomer. PCNA stimulates the nuclease activity without altering cleavage specificity. It depends on Mg(2+) as a cofactor. Phosphorylated. Phosphorylation upon DNA damage induces relocalization to the nuclear plasma.

The protein localises to the nucleus. It localises to the nucleolus. It is found in the nucleoplasm. Its subcellular location is the mitochondrion. Its function is as follows. Structure-specific nuclease with 5'-flap endonuclease and 5'-3' exonuclease activities involved in DNA replication and repair. During DNA replication, cleaves the 5'-overhanging flap structure that is generated by displacement synthesis when DNA polymerase encounters the 5'-end of a downstream Okazaki fragment. It enters the flap from the 5'-end and then tracks to cleave the flap base, leaving a nick for ligation. Also involved in the long patch base excision repair (LP-BER) pathway, by cleaving within the apurinic/apyrimidinic (AP) site-terminated flap. Acts as a genome stabilization factor that prevents flaps from equilibrating into structures that lead to duplications and deletions. Also possesses 5'-3' exonuclease activity on nicked or gapped double-stranded DNA, and exhibits RNase H activity. Also involved in replication and repair of rDNA and in repairing mitochondrial DNA. The polypeptide is Flap endonuclease 1 (fen1) (Anoplopoma fimbria (Sablefish)).